The following is a 309-amino-acid chain: Olfactory receptor 5H2 (309 aa).

At 1–28 (MEQDNTTLLTEFVLTGLTYQPEWKMPLF) the chain is on the extracellular side. N-linked (GlcNAc...) asparagine glycosylation is present at asparagine 5. A helical membrane pass occupies residues 29–49 (LVFLVIYLITIVWNLGLIALI). At 50–56 (WNDPQLH) the chain is on the cytoplasmic side. A helical transmembrane segment spans residues 57–77 (IPMYFFLGSLAFVDAWISSTV). Residues 78-97 (TPKMLVNFLAKNRMISLSEC) are Extracellular-facing. Cysteines 97 and 179 form a disulfide. The helical transmembrane segment at 98–118 (MIQFFSFAFGGTTECFLLATM) threads the bilayer. Over 119–143 (AYDRYVAICKPLLYPVIMNNSLCIR) the chain is Cytoplasmic. The chain crosses the membrane as a helical span at residues 144–164 (LLAFSFLGGFLHALIHEVLIF). At 165–193 (RLTFCNSNIIHHFYCDIIPLFMISCTDPS) the chain is on the extracellular side. Residues 194-214 (INFLMVFILSGSIQVFTIVTV) traverse the membrane as a helical segment. Topologically, residues 215–239 (LNSYTFALFTILKKKSVRGVRKAFS) are cytoplasmic. The helical transmembrane segment at 240-260 (TCGAHLLSVSLYYGPLIFMYL) threads the bilayer. Topologically, residues 261–271 (RPASPQADDQD) are extracellular. A helical transmembrane segment spans residues 272 to 292 (MIDSVFYTIIIPLLNPIIYSL). Topologically, residues 293 to 309 (RNKQVIDSFTKMVKRNV) are cytoplasmic.

Belongs to the G-protein coupled receptor 1 family.

The protein resides in the cell membrane. In terms of biological role, odorant receptor. The chain is Olfactory receptor 5H2 (OR5H2) from Homo sapiens (Human).